A 226-amino-acid polypeptide reads, in one-letter code: uncharacterized protein (226 aa).

The RNase H type-1 domain maps to 71 to 207; sequence EPDDITVYFD…ADGLAKKILS (137 aa).

This is an uncharacterized protein from Bacillus subtilis (strain 168).